A 345-amino-acid polypeptide reads, in one-letter code: Esterase (345 aa).

An N-terminal signal peptide occupies residues M1–A39. Disulfide bonds link C73–C103, C156–C180, and C236–C294.

It localises to the secreted. The sequence is that of Esterase (estA) from Streptomyces scabiei.